A 217-amino-acid chain; its full sequence is Imidazole glycerol phosphate synthase subunit HisH (217 aa).

In terms of domain architecture, Glutamine amidotransferase type-1 spans 6–214 (QIAVVDYDMG…VTQVAAAQLQ (209 aa)). Residue C84 is the Nucleophile of the active site. Catalysis depends on residues H189 and E191.

In terms of assembly, heterodimer of HisH and HisF.

The protein localises to the cytoplasm. It catalyses the reaction 5-[(5-phospho-1-deoxy-D-ribulos-1-ylimino)methylamino]-1-(5-phospho-beta-D-ribosyl)imidazole-4-carboxamide + L-glutamine = D-erythro-1-(imidazol-4-yl)glycerol 3-phosphate + 5-amino-1-(5-phospho-beta-D-ribosyl)imidazole-4-carboxamide + L-glutamate + H(+). The enzyme catalyses L-glutamine + H2O = L-glutamate + NH4(+). It functions in the pathway amino-acid biosynthesis; L-histidine biosynthesis; L-histidine from 5-phospho-alpha-D-ribose 1-diphosphate: step 5/9. Functionally, IGPS catalyzes the conversion of PRFAR and glutamine to IGP, AICAR and glutamate. The HisH subunit catalyzes the hydrolysis of glutamine to glutamate and ammonia as part of the synthesis of IGP and AICAR. The resulting ammonia molecule is channeled to the active site of HisF. This is Imidazole glycerol phosphate synthase subunit HisH from Synechococcus sp. (strain ATCC 27144 / PCC 6301 / SAUG 1402/1) (Anacystis nidulans).